The following is a 364-amino-acid chain: MSRPLTFLGIESSCDDTAAAVVRAEGTRAEILSSVVDGQTALHAAFGGVVPEIAARAHAERLDLCVERALEEAGLGLRDLDGIAVTAGPGLIGGVLSGVMLAKGLAAGTGLPLVGVNHLAGHALTPRLTDGLAFPYLMLLVSGGHCQFLIARGAEEFSRLGGSIDDAPGEAFDKTAKLLGLPQPGGPSVEAEAAAGDPRRFAFPRPMLDRPGCDMSFSGLKTALLRARDGLVAEKGGLTRADRADLCAGFQAAVVEVLAEKTRRALAVYAAEGAAEPALAVAGGVAANGPIRAALTRVAEAAGVRFLAPPLRLCTDNAAMIAWAGIERFRAGGRDGMELSARPRWPLDRSAPALIGSGRKGAKA.

Positions 118 and 122 each coordinate Fe cation. Substrate is bound by residues 140–144 (LVSGG), Asp-173, Gly-186, and Asn-288. Asp-316 serves as a coordination point for Fe cation.

This sequence belongs to the KAE1 / TsaD family. Requires Fe(2+) as cofactor.

It is found in the cytoplasm. The catalysed reaction is L-threonylcarbamoyladenylate + adenosine(37) in tRNA = N(6)-L-threonylcarbamoyladenosine(37) in tRNA + AMP + H(+). In terms of biological role, required for the formation of a threonylcarbamoyl group on adenosine at position 37 (t(6)A37) in tRNAs that read codons beginning with adenine. Is involved in the transfer of the threonylcarbamoyl moiety of threonylcarbamoyl-AMP (TC-AMP) to the N6 group of A37, together with TsaE and TsaB. TsaD likely plays a direct catalytic role in this reaction. This Cereibacter sphaeroides (strain ATCC 17023 / DSM 158 / JCM 6121 / CCUG 31486 / LMG 2827 / NBRC 12203 / NCIMB 8253 / ATH 2.4.1.) (Rhodobacter sphaeroides) protein is tRNA N6-adenosine threonylcarbamoyltransferase.